The following is a 332-amino-acid chain: 3-ketodihydrosphingosine reductase (332 aa).

An N-terminal signal peptide occupies residues 1–25 (MLLLAAAGLVAFVLLLYMVSPLISP). Residues 26-270 (KPLALPGAHV…GNFNSSIGSD (245 aa)) are Cytoplasmic-facing. The NADPH site is built by Gly39, Ser41, Ser42, Gly43, Arg64, Lys68, and Asp93. Residues 39–43 (GGSSG) carry the GXSXG motif. Ser172 acts as the Proton donor in catalysis. Tyr186 acts as the Proton acceptor in catalysis. NADP(+)-binding residues include Tyr186 and Lys190. The active-site Lowers pKa of active site Tyr is the Lys190. The chain crosses the membrane as a helical span at residues 271-291 (GYMLSSLTCGMAPVTSITEGL). Topologically, residues 292–293 (QQ) are lumenal. Residues 294–314 (VVTMGLFRTIALFYLGSFDNI) form a helical membrane-spanning segment. At 315–332 (VRRCMVQKAKPEVVDKTA) the chain is on the cytoplasmic side.

This sequence belongs to the short-chain dehydrogenases/reductases (SDR) family.

The protein resides in the endoplasmic reticulum membrane. It carries out the reaction sphinganine + NADP(+) = 3-oxosphinganine + NADPH + H(+). Its pathway is lipid metabolism; sphingolipid metabolism. In terms of biological role, catalyzes the reduction of 3'-oxosphinganine (3-ketodihydrosphingosine/KDS) to sphinganine (dihydrosphingosine/DHS), the second step of de novo sphingolipid biosynthesis. The sequence is that of 3-ketodihydrosphingosine reductase (Kdsr) from Mus musculus (Mouse).